Consider the following 272-residue polypeptide: 3-keto-5-aminohexanoate cleavage enzyme (272 aa).

Glu-15 contacts (5S)-5-amino-3-oxohexanoate. His-47 and His-49 together coordinate Zn(2+). 3 residues coordinate (5S)-5-amino-3-oxohexanoate: Ser-83, Gly-86, and Thr-107. Residue Glu-226 participates in Zn(2+) binding.

The protein belongs to the BKACE family. Kce subfamily. Homotetramer. It depends on Zn(2+) as a cofactor.

It carries out the reaction (5S)-5-amino-3-oxohexanoate + acetyl-CoA = (3S)-3-aminobutanoyl-CoA + acetoacetate. It participates in amino-acid degradation; L-lysine degradation via acetate pathway. 3-fold increase in activity by addition of 10 mM 2-mercaptoethanol. Addition of CoCl(2) and to a lesser extent MnCl(2) increases the activity but not MgCl(2). Inhibited by phosphate buffer but not by 5,5'-dithio-2-nitrobenzoic acid. Its function is as follows. Involved in the anaerobic fermentation of lysine. Catalyzes the reversible reaction between 3-keto-5-aminohexanoate (KAH) and acetyl-CoA to form 3-aminobutyryl-CoA and acetoacetate. The reaction involves the deprotonation of KAH, the nucleophilic addition onto acetyl-CoA and the intramolecular transfer of the CoA moiety. It can also use beta-alanyl-CoA as substrate. This Fusobacterium nucleatum subsp. nucleatum (strain ATCC 25586 / DSM 15643 / BCRC 10681 / CIP 101130 / JCM 8532 / KCTC 2640 / LMG 13131 / VPI 4355) protein is 3-keto-5-aminohexanoate cleavage enzyme.